The sequence spans 943 residues: Translation initiation factor IF-2 (943 aa).

A compositionally biased stretch (low complexity) spans 99-113 (VKAAQTQAAPVQPEQ). Positions 99-354 (VKAAQTQAAP…LEPNQHAFQA (256 aa)) are disordered. Basic and acidic residues predominate over residues 117–141 (DAVKARAEAAARAEARAKAEAEAAK). Low complexity predominate over residues 145 to 172 (AKAGNKAKPAAQKPTEAKAETAPVAAET). Residues 173 to 197 (KPAEPKEKAVKPKHERNGKGKDAKK) show a composition bias toward basic and acidic residues. A compositionally biased stretch (low complexity) spans 200 to 215 (KPAAPAVPQPVVSAEE). Over residues 216-250 (QAQRDEEARRAAALRAHQEALLKEKQERQARREAM) the composition is skewed to basic and acidic residues. Residues 251-264 (KQQAEQQAKAAQEA) show a composition bias toward low complexity. Composition is skewed to basic and acidic residues over residues 295–308 (AKKE…DEGQ) and 319–335 (GGRD…ERVR). In terms of domain architecture, tr-type G spans 443–612 (PRPPVVTVMG…LLEAEVLELT (170 aa)). The interval 452–459 (GHVDHGKT) is G1. 452 to 459 (GHVDHGKT) is a binding site for GTP. A G2 region spans residues 477 to 481 (GITQH). The interval 498–501 (DTPG) is G3. GTP is bound by residues 498-502 (DTPGH) and 552-555 (NKID). Residues 552–555 (NKID) form a G4 region. The segment at 588–590 (SAK) is G5.

It belongs to the TRAFAC class translation factor GTPase superfamily. Classic translation factor GTPase family. IF-2 subfamily.

The protein resides in the cytoplasm. Functionally, one of the essential components for the initiation of protein synthesis. Protects formylmethionyl-tRNA from spontaneous hydrolysis and promotes its binding to the 30S ribosomal subunits. Also involved in the hydrolysis of GTP during the formation of the 70S ribosomal complex. The chain is Translation initiation factor IF-2 from Neisseria gonorrhoeae (strain ATCC 700825 / FA 1090).